Consider the following 892-residue polypeptide: Alanine--tRNA ligase (892 aa).

Residues His574, His578, Cys676, and His680 each contribute to the Zn(2+) site.

It belongs to the class-II aminoacyl-tRNA synthetase family. Zn(2+) serves as cofactor.

The protein localises to the cytoplasm. It carries out the reaction tRNA(Ala) + L-alanine + ATP = L-alanyl-tRNA(Ala) + AMP + diphosphate. Catalyzes the attachment of alanine to tRNA(Ala) in a two-step reaction: alanine is first activated by ATP to form Ala-AMP and then transferred to the acceptor end of tRNA(Ala). Also edits incorrectly charged Ser-tRNA(Ala) and Gly-tRNA(Ala) via its editing domain. This Prochlorococcus marinus (strain MIT 9303) protein is Alanine--tRNA ligase.